The following is a 427-amino-acid chain: Trigger factor (427 aa).

In terms of domain architecture, PPIase FKBP-type spans 163-248; sequence GDTVVIDFVG…IHEVKAKEVP (86 aa).

Belongs to the FKBP-type PPIase family. Tig subfamily.

The protein localises to the cytoplasm. The catalysed reaction is [protein]-peptidylproline (omega=180) = [protein]-peptidylproline (omega=0). Its function is as follows. Involved in protein export. Acts as a chaperone by maintaining the newly synthesized protein in an open conformation. Functions as a peptidyl-prolyl cis-trans isomerase. The chain is Trigger factor from Streptococcus pneumoniae (strain ATCC 700669 / Spain 23F-1).